Consider the following 119-residue polypeptide: Photosystem II extrinsic protein V (119 aa).

Residues Cys-36, Cys-39, and His-40 each contribute to the heme c site.

Belongs to the cytochrome c family. PsbV subfamily. As to quaternary structure, PSII is composed of 1 copy each of membrane proteins PsbA, PsbB, PsbC, PsbD, PsbE, PsbF, PsbH, PsbI, PsbJ, PsbK, PsbL, PsbM, PsbT, PsbX, PsbY, PsbZ, Psb30/Ycf12, peripheral proteins PsbO, CyanoQ (PsbQ), PsbU, PsbV and a large number of cofactors. It forms dimeric complexes. Heme c serves as cofactor.

It is found in the cellular thylakoid membrane. Functionally, one of the extrinsic, lumenal subunits of photosystem II (PSII). PSII is a light-driven water plastoquinone oxidoreductase, using light energy to abstract electrons from H(2)O, generating a proton gradient subsequently used for ATP formation. The extrinsic proteins stabilize the structure of photosystem II oxygen-evolving complex (OEC), the ion environment of oxygen evolution and protect the OEC against heat-induced inactivation. Low-potential cytochrome c that plays a role in the OEC of PSII. This is Photosystem II extrinsic protein V (psbV) from Aphanizomenon flos-aquae.